A 262-amino-acid chain; its full sequence is Fibroin light chain (262 aa).

Positions 1 to 16 (MKPIFLVLLVATSAYA) are cleaved as a signal peptide. Serine 19 carries the post-translational modification N-acetylserine; in short form. Cysteine 101 and cysteine 160 are oxidised to a cystine.

In terms of assembly, silk fibroin elementary unit consists in a disulfide-linked heavy and light chain and a p25 glycoprotein in molar ratios of 6:6:1. This results in a complex of approximately 2.3 MDa. In terms of processing, the interchain disulfide bridge is essential for the intracellular transport and secretion of fibroin. Partially N-terminally processed to yield a short form which lacks the first two residues of the long form. In terms of tissue distribution, produced exclusively in the posterior (PSG) section of silk glands, which are essentially modified salivary glands.

It is found in the secreted. In terms of biological role, it is likely that the major role of L-chain is to prevent the retention of H-chain in ER by forming the disulfide linkage. This is Fibroin light chain (FIBL) from Bombyx mori (Silk moth).